Consider the following 205-residue polypeptide: MPVGVPKVPFRAPGDEDATWVDLYNRLYRERLLFLAQDINNEIANQLMGLMVYLSAEDANKEIFSFINCPGGSVIPGVGLYRMMQAIVPDVNTICMGVAASMGSFILIGGEMPKRIALPHARVMIHQPASSYYDGSAADFHNESKHVTLVREYITECYIERTGQPEEVIQRDLNRDVFMSATEAQAYGIVDVVAEDPLIFNRFLK.

The active-site Nucleophile is the serine 101. Residue histidine 126 is part of the active site.

This sequence belongs to the peptidase S14 family. As to quaternary structure, component of the chloroplastic Clp protease core complex.

The protein resides in the plastid. It is found in the chloroplast stroma. The catalysed reaction is Hydrolysis of proteins to small peptides in the presence of ATP and magnesium. alpha-casein is the usual test substrate. In the absence of ATP, only oligopeptides shorter than five residues are hydrolyzed (such as succinyl-Leu-Tyr-|-NHMec, and Leu-Tyr-Leu-|-Tyr-Trp, in which cleavage of the -Tyr-|-Leu- and -Tyr-|-Trp bonds also occurs).. Its function is as follows. Cleaves peptides in various proteins in a process that requires ATP hydrolysis. Has a chymotrypsin-like activity. Plays a major role in the degradation of misfolded proteins. The chain is ATP-dependent Clp protease proteolytic subunit from Pinus contorta (Shore pine).